The chain runs to 251 residues: UDP-Glc:alpha-D-GlcNAc-diphosphoundecaprenol beta-1,3-glucosyltransferase WfaP (251 aa).

Belongs to the glycosyltransferase 2 family. Mn(2+) serves as cofactor. It depends on Mg(2+) as a cofactor.

Its subcellular location is the cell inner membrane. It catalyses the reaction N-acetyl-alpha-D-glucosaminyl-di-trans,octa-cis-undecaprenyl diphosphate + UDP-alpha-D-glucose = beta-D-Glc-(1-&gt;3)-alpha-D-GlcNAc-di-trans,octa-cis-undecaprenyl diphosphate + UDP + H(+). The protein operates within bacterial outer membrane biogenesis; lipopolysaccharide biosynthesis. Its function is as follows. Catalyzes the addition of Glc, the second sugar moiety of the O56-antigen repeating unit, to GlcNAc-pyrophosphate-undecaprenol. In Escherichia coli, this protein is UDP-Glc:alpha-D-GlcNAc-diphosphoundecaprenol beta-1,3-glucosyltransferase WfaP (wfaP).